Here is a 346-residue protein sequence, read N- to C-terminus: Ion-translocating oxidoreductase complex subunit D (346 aa).

The next 4 helical transmembrane spans lie at 20-40 (IMIQ…TFFG), 42-62 (GIII…GVVL), 69-91 (LASR…SLPP), and 120-140 (PFNP…VQMT). Residue Thr187 is modified to FMN phosphoryl threonine. A run of 5 helical transmembrane segments spans residues 212–232 (ASAG…YLIW), 242–262 (LSLL…APVV), 264–284 (APPL…FIAT), 290–310 (AATV…VWLI), and 314–334 (GGYP…VPLI).

It belongs to the NqrB/RnfD family. The complex is composed of six subunits: RnfA, RnfB, RnfC, RnfD, RnfE and RnfG. The cofactor is FMN.

It is found in the cell inner membrane. Part of a membrane-bound complex that couples electron transfer with translocation of ions across the membrane. The protein is Ion-translocating oxidoreductase complex subunit D of Sodalis glossinidius (strain morsitans).